A 413-amino-acid polypeptide reads, in one-letter code: Serine hydroxymethyltransferase (413 aa).

Residues Leu-117 and 121-123 each bind (6S)-5,6,7,8-tetrahydrofolate; that span reads GHL. An N6-(pyridoxal phosphate)lysine modification is found at Lys-226. (6S)-5,6,7,8-tetrahydrofolate-binding positions include Glu-239 and 349 to 351; that span reads SPF.

The protein belongs to the SHMT family. As to quaternary structure, homodimer. It depends on pyridoxal 5'-phosphate as a cofactor.

It is found in the cytoplasm. It carries out the reaction (6R)-5,10-methylene-5,6,7,8-tetrahydrofolate + glycine + H2O = (6S)-5,6,7,8-tetrahydrofolate + L-serine. The protein operates within one-carbon metabolism; tetrahydrofolate interconversion. Its pathway is amino-acid biosynthesis; glycine biosynthesis; glycine from L-serine: step 1/1. Functionally, catalyzes the reversible interconversion of serine and glycine with tetrahydrofolate (THF) serving as the one-carbon carrier. This reaction serves as the major source of one-carbon groups required for the biosynthesis of purines, thymidylate, methionine, and other important biomolecules. Also exhibits THF-independent aldolase activity toward beta-hydroxyamino acids, producing glycine and aldehydes, via a retro-aldol mechanism. This Bacillus cereus (strain AH820) protein is Serine hydroxymethyltransferase.